Here is a 483-residue protein sequence, read N- to C-terminus: ATP synthase subunit beta (483 aa).

169-176 (GGAGVGKT) serves as a coordination point for ATP.

The protein belongs to the ATPase alpha/beta chains family. In terms of assembly, F-type ATPases have 2 components, CF(1) - the catalytic core - and CF(0) - the membrane proton channel. CF(1) has five subunits: alpha(3), beta(3), gamma(1), delta(1), epsilon(1). CF(0) has three main subunits: a(1), b(2) and c(9-12). The alpha and beta chains form an alternating ring which encloses part of the gamma chain. CF(1) is attached to CF(0) by a central stalk formed by the gamma and epsilon chains, while a peripheral stalk is formed by the delta and b chains.

The protein localises to the cell membrane. The enzyme catalyses ATP + H2O + 4 H(+)(in) = ADP + phosphate + 5 H(+)(out). Its function is as follows. Produces ATP from ADP in the presence of a proton gradient across the membrane. The catalytic sites are hosted primarily by the beta subunits. This Rhodococcus opacus (strain B4) protein is ATP synthase subunit beta.